We begin with the raw amino-acid sequence, 588 residues long: Adenine deaminase (588 aa).

This sequence belongs to the metallo-dependent hydrolases superfamily. Adenine deaminase family. Homodimer. Mn(2+) is required as a cofactor.

The enzyme catalyses adenine + H2O + H(+) = hypoxanthine + NH4(+). This chain is Adenine deaminase, found in Escherichia coli O6:H1 (strain CFT073 / ATCC 700928 / UPEC).